The primary structure comprises 59 residues: UPF0434 protein Rsph17025_2896 (59 aa).

It belongs to the UPF0434 family.

The chain is UPF0434 protein Rsph17025_2896 from Cereibacter sphaeroides (strain ATCC 17025 / ATH 2.4.3) (Rhodobacter sphaeroides).